Here is a 279-residue protein sequence, read N- to C-terminus: Pantothenate synthetase (279 aa).

An ATP-binding site is contributed by Met-26–His-33. His-33 serves as the catalytic Proton donor. Gln-57 provides a ligand contact to (R)-pantoate. Gln-57 is a beta-alanine binding site. An ATP-binding site is contributed by Gly-144–Asp-147. (R)-pantoate is bound at residue Gln-150. Residues Val-173 and Leu-181–Arg-184 each bind ATP.

It belongs to the pantothenate synthetase family. In terms of assembly, homodimer.

It localises to the cytoplasm. It carries out the reaction (R)-pantoate + beta-alanine + ATP = (R)-pantothenate + AMP + diphosphate + H(+). It participates in cofactor biosynthesis; (R)-pantothenate biosynthesis; (R)-pantothenate from (R)-pantoate and beta-alanine: step 1/1. In terms of biological role, catalyzes the condensation of pantoate with beta-alanine in an ATP-dependent reaction via a pantoyl-adenylate intermediate. The chain is Pantothenate synthetase from Burkholderia cenocepacia (strain HI2424).